The following is a 304-amino-acid chain: Glucose-6-phosphate isomerase (304 aa).

E146 functions as the Proton donor in the catalytic mechanism. Residue H177 is part of the active site.

It belongs to the GPI family.

It is found in the cytoplasm. It carries out the reaction alpha-D-glucose 6-phosphate = beta-D-fructose 6-phosphate. Its pathway is carbohydrate degradation; glycolysis; D-glyceraldehyde 3-phosphate and glycerone phosphate from D-glucose: step 2/4. The chain is Glucose-6-phosphate isomerase (PGI) from Calanus finmarchicus (Calanus tonsus).